The chain runs to 300 residues: Energy-coupling factor transporter ATP-binding protein EcfA2 (300 aa).

Residues 3-258 (IKAKNIVKIY…NKFLIENKML (256 aa)) form the ABC transporter domain. 40–47 (GQTGSGKT) contributes to the ATP binding site.

The protein belongs to the ABC transporter superfamily. Energy-coupling factor EcfA family. In terms of assembly, forms a stable energy-coupling factor (ECF) transporter complex composed of 2 membrane-embedded substrate-binding proteins (S component), 2 ATP-binding proteins (A component) and 2 transmembrane proteins (T component).

It localises to the cell membrane. Its function is as follows. ATP-binding (A) component of a common energy-coupling factor (ECF) ABC-transporter complex. Unlike classic ABC transporters this ECF transporter provides the energy necessary to transport a number of different substrates. This is Energy-coupling factor transporter ATP-binding protein EcfA2 from Mesomycoplasma hyopneumoniae (strain 7448) (Mycoplasma hyopneumoniae).